The chain runs to 337 residues: MKVAVDAMGGDFAPQSVIEGVLQARSEFTDLDFILYGDQAQIEPLIDDMTRLTIVHTTEKIASDDEPVRAIRRKKQASMVLAAQAVKDGQADALFSLGNTGALLAAGLFIIGRVKGIDRPGLMPTLPSINSDQGFNMLDVGANAEAKPEHLHQYGLMGNFYAKDVRGIENPRIALLNNGTEATKGDELHKATYQLLADDPDLNFVGNVEANDLLKGVADVVVTDGFTGNATLKAIEGTATIVMSQVKHAIMDAGVKEKIGGLLLRGSVGGIREKFDTSIYGGAVLLGLKAPVIKAHGAADARTVYYTVKQIHAMLANQTVQKVIDYFSDQAAQKNSN.

It belongs to the PlsX family. In terms of assembly, homodimer. Probably interacts with PlsY.

Its subcellular location is the cytoplasm. It catalyses the reaction a fatty acyl-[ACP] + phosphate = an acyl phosphate + holo-[ACP]. Its pathway is lipid metabolism; phospholipid metabolism. Its function is as follows. Catalyzes the reversible formation of acyl-phosphate (acyl-PO(4)) from acyl-[acyl-carrier-protein] (acyl-ACP). This enzyme utilizes acyl-ACP as fatty acyl donor, but not acyl-CoA. The sequence is that of Phosphate acyltransferase from Latilactobacillus sakei subsp. sakei (strain 23K) (Lactobacillus sakei subsp. sakei).